The following is a 147-amino-acid chain: Austinoid biosynthesis clusters protein H (147 aa).

This sequence belongs to the trt14 isomerase family. As to quaternary structure, homodimer.

Its pathway is secondary metabolite biosynthesis; terpenoid biosynthesis. Its function is as follows. Part of the gene cluster B that mediates the biosynthesis of the fungal meroterpenoid acetoxydehydroaustin. The first step of the pathway is the synthesis of 3,5-dimethylorsellinic acid by the polyketide synthase ausA. 3,5-dimethylorsellinic acid is then prenylated by the polyprenyl transferase ausN. Further epoxidation by the FAD-dependent monooxygenase ausM and cyclization by the probable terpene cyclase ausL lead to the formation of protoaustinoid A. Protoaustinoid A is then oxidized to spiro-lactone preaustinoid A3 by the combined action of the FAD-binding monooxygenases ausB and ausC, and the dioxygenase ausE. Acid-catalyzed keto-rearrangement and ring contraction of the tetraketide portion of preaustinoid A3 by ausJ lead to the formation of preaustinoid A4. The aldo-keto reductase ausK, with the help of ausH, is involved in the next step by transforming preaustinoid A4 into isoaustinone which is in turn hydroxylated by the P450 monooxygenase ausI to form austinolide. The cytochrome P450 monooxygenase ausG then modifies austinolide to austinol. Austinol is further acetylated to austin by the O-acetyltransferase ausP, which spontaneously changes to dehydroaustin. The cytochrome P450 monooxygenase then converts dehydroaustin is into 7-dehydrodehydroaustin. The hydroxylation catalyzed by ausR permits the second O-acetyltransferase ausQ to add an additional acetyl group to the molecule, leading to the formation of acetoxydehydroaustin. Due to genetic rearrangements of the clusters and the subsequent loss of some enzymes, the end product of the Penicillium brasilianum austinoid biosynthesis clusters is acetoxydehydroaustin. This is Austinoid biosynthesis clusters protein H from Penicillium brasilianum.